Here is a 704-residue protein sequence, read N- to C-terminus: Elongation factor G 2 (704 aa).

Residues 8–290 (ERYRNIGISA…AIIDYLPSPV (283 aa)) enclose the tr-type G domain. GTP is bound by residues 17–24 (AHIDAGKT), 88–92 (DTPGH), and 142–145 (NKMD).

This sequence belongs to the TRAFAC class translation factor GTPase superfamily. Classic translation factor GTPase family. EF-G/EF-2 subfamily.

It is found in the cytoplasm. Functionally, catalyzes the GTP-dependent ribosomal translocation step during translation elongation. During this step, the ribosome changes from the pre-translocational (PRE) to the post-translocational (POST) state as the newly formed A-site-bound peptidyl-tRNA and P-site-bound deacylated tRNA move to the P and E sites, respectively. Catalyzes the coordinated movement of the two tRNA molecules, the mRNA and conformational changes in the ribosome. This Polaromonas sp. (strain JS666 / ATCC BAA-500) protein is Elongation factor G 2.